A 33-amino-acid chain; its full sequence is Rugosin-B (33 aa).

A disulfide bond links Cys-27 and Cys-33.

This sequence belongs to the frog skin active peptide (FSAP) family. Brevinin subfamily. As to expression, expressed by the skin glands.

Its subcellular location is the secreted. In terms of biological role, shows antibacterial activity against both Gram-negative and Gram-positive bacteria. In Glandirana rugosa (Japanese wrinkled frog), this protein is Rugosin-B.